The primary structure comprises 327 residues: Interleukin-12 subunit beta (327 aa).

The N-terminal stretch at 1 to 22 (MCLQQLVISWVSLVWLASPLLA) is a signal peptide. The 84-residue stretch at 23–106 (IWELEKNVYV…LSQMLLLLHK (84 aa)) folds into the Ig-like C2-type domain. The cysteines at positions 50 and 90 are disulfide-linked. Residues Asn-134 and Asn-152 are each glycosylated (N-linked (GlcNAc...) asparagine). Positions 237–327 (PPKNLKMKPS…WSEWATMSCP (91 aa)) constitute a Fibronectin type-III domain.

This sequence belongs to the IL-12B family. In terms of assembly, heterodimer with IL12A; disulfide-linked. The heterodimer is known as interleukin IL-12. Heterodimer with IL23A; disulfide-linked. The heterodimer is known as interleukin IL-23. Also secreted as a monomer. Interacts with NBR1; this interaction promotes IL-12 secretion.

Its subcellular location is the secreted. Functionally, cytokine that can act as a growth factor for activated T and NK cells, enhance the lytic activity of NK/lymphokine-activated killer cells, and stimulate the production of IFN-gamma by resting PBMC. Associates with IL23A to form the IL-23 interleukin, a heterodimeric cytokine which functions in innate and adaptive immunity. IL-23 may constitute with IL-17 an acute response to infection in peripheral tissues. IL-23 binds to a heterodimeric receptor complex composed of IL12RB1 and IL23R, activates the Jak-Stat signaling cascade, stimulates memory rather than naive T-cells and promotes production of pro-inflammatory cytokines. IL-23 induces autoimmune inflammation and thus may be responsible for autoimmune inflammatory diseases and may be important for tumorigenesis. The sequence is that of Interleukin-12 subunit beta (IL12B) from Marmota monax (Woodchuck).